Consider the following 256-residue polypeptide: Nuclear shuttle protein (256 aa).

The short motif at 18–39 (NITNRYPIKRKYVAGHTRPCVR) is the Bipartite nuclear localization signal element. Residues 81–96 (SRGPSGDGRSRDYIKL) carry the Nuclear localization signal motif. Residues 150–187 (ELFGPYSACYVNLRLLNNQQHRYRVLHSVKRFVSSSGD) are interaction with Arabidopsis thaliana NSI protein.

It belongs to the begomovirus nuclear shuttle protein family. In terms of assembly, binds to single-stranded and double-stranded viral DNA. Interacts with the host nuclear shuttle interacting (NSI) protein. This interaction may allow NSP to recruit NSI monomers to the viral genome and thus regulate nuclear export of viral genome by NSP.

The protein localises to the host nucleus. It localises to the host cytoplasm. Its subcellular location is the host cell membrane. In terms of biological role, binds to the genomic viral ssDNA, shuttles it into and out of the cell nucleus. Begomoviruses use 2 proteins to transport their DNA from cell to cell. The nuclear shuttle protein (NSP) shuttles it between nucleus and cytoplasm and the movement protein (MP) probably transports the DNA-NSP complex to the cell periphery and facilitates movement across the cell wall. This Hewittia sublobata (Coralbush) protein is Nuclear shuttle protein.